A 302-amino-acid chain; its full sequence is Glycine--tRNA ligase alpha subunit (302 aa).

This sequence belongs to the class-II aminoacyl-tRNA synthetase family. In terms of assembly, tetramer of two alpha and two beta subunits.

It localises to the cytoplasm. It catalyses the reaction tRNA(Gly) + glycine + ATP = glycyl-tRNA(Gly) + AMP + diphosphate. This Xanthomonas axonopodis pv. citri (strain 306) protein is Glycine--tRNA ligase alpha subunit.